We begin with the raw amino-acid sequence, 869 residues long: MAGCRGSLCCCCRWCCCCGERETRTPEELTILGETQEEEDEILPRKDYESLDYDRCINDPYLEVLETMDHKKGRWYEVVKWTVVFAIGVCTGLVGLFVDFFVQLFTQLKFGVVEASVEECSQKGCLALSLLELLGFNLTFVFLASLLVLIEPVAAGSGIPEIKCYLNGVKVPGIVRLRTLLCKVFGVLFSVAGGLFVGKEGPMIHSGAVVGAGLPQFQSISLRKIQFNFPYFRSDRDKRDFVSAGAAAGIAAAFGAPIGATLFSLEEGSSFWNQGLTWKVLFCSMSATFTLNFFRSGIQFGSWGSFQLPGLLNFGEFKCSDSDKKCHLWTAMDMGFFVVMGVIGGLLGATFNCLNKRLAKYRMRNVHPKPKLVRVLESLLVSLVTTLVVFVASMVLGECRQMSSSSQISNGSLKLQVTSDVNSSIKAFFCPNDTYNDMATLFFNPQESAILQLFHQDGTFSPITLALFFVLYFLLACWTYGISVPSGLFVPSLLCGAAFGRLVANVLKSYIGLSHIYSGTFSLIGAAALLGGVVRMTISLTVILIESTNEITYGLPIMITLMVAKWTGDFFNKGIYDIHVGLRGVPLLEWETEVEMDKLRASDIMEPNLTYVYPHTRIQSLVSILRTTVHHAFPVVTENRGNEKEFMKGNQLISNNIKFKKSSILTRAGEQRRRSQSMKSYPSSELRNVCDEHVASEEPAEKEDLLQQMLERRYTPYPNLYPDQSPSEDWTMEERFRPLTFHGLILRSQLVTLLVRGVCYSESQSSASQPRLSYAEMAEDYPRFPDIHDLDLTLLNPRMIVDVTPYMNPSPFTVSPNTHVSQVFNLFRTMGLRHLPVVNAVGEIVGIVTRHNLTYEFLQARLRQHYQTI.

At 1–80 (MAGCRGSLCC…KKGRWYEVVK (80 aa)) the chain is on the cytoplasmic side. Transmembrane regions (helical) follow at residues 81-113 (WTVVFAIGVCTGLVGLFVDFFVQLFTQLKFGVV) and 128-150 (LSLLELLGFNLTFVFLASLLVLI). Positions 156–160 (GSGIP) match the Selectivity filter part_1 motif. S157 is a binding site for chloride. An intramembrane region (helical) is located at residues 159–166 (IPEIKCYL). A run of 2 helical transmembrane segments spans residues 176–194 (RLRTLLCKVFGVLFSVAGG) and 200–217 (EGPMIHSGAVVGAGLPQF). Residues 198–202 (GKEGP) carry the Selectivity filter part_2 motif. Intramembrane regions (helical) lie at residues 241–253 (FVSAGAAAGIAAA) and 257–265 (PIGATLFSL). Transmembrane regions (helical) follow at residues 277–294 (TWKVLFCSMSATFTLNFF), 335–364 (GFFVVMGVIGGLLGATFNCLNKRLAKYRMR), and 371–392 (KLVRVLESLLVSLVTTLVVFVA). N410, N422, and N432 each carry an N-linked (GlcNAc...) asparagine glycan. The next 2 membrane-spanning stretches (helical) occupy residues 462 to 481 (PITLALFFVLYFLLACWTYG) and 487 to 511 (GLFVPSLLCGAAFGRLVANVLKSYI). Residues 487–491 (GLFVP) carry the Selectivity filter part_3 motif. F489 provides a ligand contact to chloride. The helical intramembrane region spans 519–533 (GTFSLIGAAALLGGV). Positions 534–536 (VRM) form an intramembrane region, note=Loop between two helices. Residues 537–548 (TISLTVILIEST) constitute an intramembrane region (helical). The segment at residues 549–552 (NEIT) is an intramembrane region (note=Loop between two helices). Residues 553-571 (YGLPIMITLMVAKWTGDFF) traverse the membrane as a helical segment. Topologically, residues 572–869 (NKGIYDIHVG…ARLRQHYQTI (298 aa)) are cytoplasmic. Y576 is a binding site for chloride. In terms of domain architecture, CBS 1 spans 605-662 (MEPNLTYVYPHTRIQSLVSILRTTVHHAFPVVTENRGNEKEFMKGNQLISNNIKFKKS). 630–632 (HHA) is an ATP binding site. The tract at residues 668–687 (AGEQRRRSQSMKSYPSSELR) is disordered. The segment covering 677–686 (SMKSYPSSEL) has biased composition (polar residues). Residue S773 is modified to Phosphoserine. One can recognise a CBS 2 domain in the interval 807-868 (MNPSPFTVSP…QARLRQHYQT (62 aa)). 849–852 (TRHN) contributes to the ATP binding site.

Belongs to the chloride channel (TC 2.A.49) family. ClC-6/CLCN6 subfamily. Post-translationally, N-glycosylated on several asparagine residues.

It localises to the late endosome membrane. It carries out the reaction 2 chloride(in) + H(+)(out) = 2 chloride(out) + H(+)(in). Voltage-gated channel mediating the exchange of chloride ions against protons. Functions as antiporter and contributes to the acidification of the late endosome lumen. The CLC channel family contains both chloride channels and proton-coupled anion transporters that exchange chloride or another anion for protons. The presence of conserved gating glutamate residues is typical for family members that function as antiporters. This is H(+)/Cl(-) exchange transporter 6 (CLCN6) from Oryctolagus cuniculus (Rabbit).